We begin with the raw amino-acid sequence, 233 residues long: LexA repressor (233 aa).

Positions 26 to 46 form a DNA-binding region, H-T-H motif; it reads FEEMKEALDLKSKSGVHRLIS. Catalysis depends on for autocatalytic cleavage activity residues S153 and K191.

This sequence belongs to the peptidase S24 family. In terms of assembly, homodimer.

The catalysed reaction is Hydrolysis of Ala-|-Gly bond in repressor LexA.. Represses a number of genes involved in the response to DNA damage (SOS response), including recA and lexA. In the presence of single-stranded DNA, RecA interacts with LexA causing an autocatalytic cleavage which disrupts the DNA-binding part of LexA, leading to derepression of the SOS regulon and eventually DNA repair. The sequence is that of LexA repressor from Erythrobacter litoralis (strain HTCC2594).